The following is a 44-amino-acid chain: Photosystem I reaction center subunit IX (44 aa).

The helical transmembrane segment at 7–27 (YLSVAPVLATLWFGSLAGLLI) threads the bilayer.

It belongs to the PsaJ family.

Its subcellular location is the plastid. It localises to the chloroplast thylakoid membrane. In terms of biological role, may help in the organization of the PsaE and PsaF subunits. The protein is Photosystem I reaction center subunit IX of Piper cenocladum (Ant piper).